A 384-amino-acid polypeptide reads, in one-letter code: MTPIQNAQQIFNRQHKNLPEITVYAPGRVNIIGEHTDYNDGFVMPCAINFGTAISGAIRDDHIWNVYAADLDETDEFSLNVEIPKSEHKWANYVRGVVKFIQERYPHFQQGANLVISGNVPLSSGLSSSAALEVAVGKFCQQLGDLPLSHTDIALNGQKAENQFVGANCGNMDQLISALGQENHLLMIDCRSLETTPTPVPQDVAVIIVNSNVPHDLVTGEYNTRRQQCEEAAKFFGVKALRDVSVEQFQKREAELTALSPLAAKRARHVVTENQRVLDAVEALKNNDLTCLGKLMEASHDSMRDDFEITVPQIDYLVELVQLVIGKSGGARMTGGGFGGCIVALAPHDKVDAVRKIIADNYEKTTGLKETFYVCTASQGVRVI.

Residue E34–D37 coordinates substrate. Position 123-129 (S123–S129) interacts with ATP. Residues S129 and E161 each coordinate Mg(2+). The Proton acceptor role is filled by D173. Y222 is a binding site for substrate.

This sequence belongs to the GHMP kinase family. GalK subfamily.

The protein localises to the cytoplasm. It catalyses the reaction alpha-D-galactose + ATP = alpha-D-galactose 1-phosphate + ADP + H(+). The protein operates within carbohydrate metabolism; galactose metabolism. In terms of biological role, catalyzes the transfer of the gamma-phosphate of ATP to D-galactose to form alpha-D-galactose-1-phosphate (Gal-1-P). The sequence is that of Galactokinase from Haemophilus influenzae (strain PittEE).